The following is a 250-amino-acid chain: Cellulose biosynthesis protein BcsQ (250 aa).

9–16 provides a ligand contact to ATP; sequence VRGGVGTT.

Belongs to the BcsQ family.

Its subcellular location is the cytoplasm. Its function is as follows. Essential for cellulose biosynthesis, shown for strain 1094, a commensal, natural cellulose producer. Also shown in strain W3110 which has a restored reading frame (TAG stop codon to TTG for amino acid 6, called strain AR3110), this protein. May play a role in subcellular localization of an active cellulose biosynthesis apparatus at the bacterial cell pole. The combination of cellulose and the curli fiber network confer cohesion, elasticity and tissue-like properties to colonies. This chain is Cellulose biosynthesis protein BcsQ, found in Escherichia coli (strain K12).